Reading from the N-terminus, the 495-residue chain is Probable staphylococcal-like nuclease CAN4 (495 aa).

The N-myristoyl glycine moiety is linked to residue Gly2. Residue Cys11 is the site of S-palmitoyl cysteine attachment. Disordered stretches follow at residues 45-68 and 81-101; these read DLQVPLSPPPPSTRQQQPPPRPAL and LQVPLSPPPPSTRQQQLPPRP. Residues 50–66 show a composition bias toward pro residues; the sequence is LSPPPPSTRQQQPPPRP. Residues 297–470 enclose the TNase-like domain; it reads KTLPVNAKCI…RDARQGLWAY (174 aa). Asp310 is a binding site for Ca(2+). The active site involves Arg377. Asp382 contributes to the Ca(2+) binding site. Active-site residues include Glu385 and Arg419.

It belongs to the thermonuclease family. Requires Ca(2+) as cofactor.

It localises to the cell membrane. Functionally, enzyme that catalyzes the hydrolysis of both DNA and RNA at the 5' position of the phosphodiester bond. In Oryza sativa subsp. japonica (Rice), this protein is Probable staphylococcal-like nuclease CAN4.